A 151-amino-acid polypeptide reads, in one-letter code: UPF0208 membrane protein Spro_3315 (151 aa).

2 helical membrane passes run 46 to 64 and 70 to 90; these read FAVRFMPPLAVFTLTWQIA and GPAIATALFACSMPMQGLWWL.

The protein belongs to the UPF0208 family.

Its subcellular location is the cell inner membrane. This chain is UPF0208 membrane protein Spro_3315, found in Serratia proteamaculans (strain 568).